Here is a 273-residue protein sequence, read N- to C-terminus: Replication factor A protein 2 (273 aa).

Residues 1-13 show a composition bias toward polar residues; it reads MATYQPYNEYSSV. Residues 1–38 are disordered; it reads MATYQPYNEYSSVTGGGFENSESRPGSGESETNTRVNT. Serine 27 carries the phosphoserine modification. Over residues 29 to 38 the composition is skewed to polar residues; sequence ESETNTRVNT. Residues 69–157 constitute a DNA-binding region (OB); the sequence is VCFVGVVRNI…NIQYAVIKPI (89 aa). Serine 122 is modified (phosphoserine).

It belongs to the replication factor A protein 2 family. As to quaternary structure, heterotrimer of 69, 36, and 13 kDa chains. The DNA-binding activity may reside exclusively on the 69 kDa subunit. Interacts with MCM10. Phosphorylated in a cell cycle-dependent manner with phosphorylation increasing at the entry in S phase and dephosphorylation occurring at mitosis. Post-translationally, the N-terminus is blocked.

It is found in the nucleus. Functionally, binds to single-stranded sequences participating in DNA replication in addition to those mediating transcriptional repression (URS1) and activation (CAR1). Stimulates the activity of a cognate strand exchange protein (SEP1). It cooperates with T-AG and DNA topoisomerase I to unwind template DNA containing the simian virus 40 origin of DNA replication. This chain is Replication factor A protein 2 (RFA2), found in Saccharomyces cerevisiae (strain ATCC 204508 / S288c) (Baker's yeast).